The primary structure comprises 123 residues: Class I hydrophobin 2 (123 aa).

A signal peptide spans 1-16 (MYAYTVIAFLAASVAA). 4 disulfides stabilise this stretch: cysteine 35–cysteine 97, cysteine 43–cysteine 91, cysteine 44–cysteine 72, and cysteine 98–cysteine 116.

It belongs to the fungal hydrophobin family.

The protein resides in the secreted. It localises to the cell wall. Functionally, aerial growth, conidiation, and dispersal of filamentous fungi in the environment rely upon a capability of their secreting small amphipathic proteins called hydrophobins (HPBs) with low sequence identity. Class I can self-assemble into an outermost layer of rodlet bundles on aerial cell surfaces, conferring cellular hydrophobicity that supports fungal growth, development and dispersal; whereas Class II form highly ordered films at water-air interfaces through intermolecular interactions but contribute nothing to the rodlet structure. HYD1 and HYD2 are required for the structural integrity of the long aerial chains of microconidia. Does not seem to be important for the ability to cause seedling disease. The polypeptide is Class I hydrophobin 2 (Gibberella moniliformis (Maize ear and stalk rot fungus)).